The primary structure comprises 466 residues: Zinc finger protein ZIC 3 (466 aa).

The segment covering 65–80 (DLSSGQSSAFTPQGSG) has biased composition (polar residues). The tract at residues 65–103 (DLSSGQSSAFTPQGSGYANALGHHHHHHHHHHASQVPTY) is disordered. Residues 86 to 97 (GHHHHHHHHHHA) are compositionally biased toward basic residues. A Glycyl lysine isopeptide (Lys-Gly) (interchain with G-Cter in SUMO2) cross-link involves residue Lys-247. Residues 250–285 (LSCKWIEEAQLSRPKKSCDRTFSTMHELVTHVTMEH) form a C2H2-type 1; atypical zinc finger. A C2H2-type 2; atypical zinc finger spans residues 294–321 (HVCYWEECPREGKSFKAKYKLVNHIRVH). 2 consecutive short sequence motifs (nuclear localization signal) follow at residues 296-321 (CYWE…IRVH) and 329-351 (CPFP…KRTH). 3 C2H2-type zinc fingers span residues 327–351 (FPCP…KRTH), 357–381 (FKCE…MHVH), and 387–409 (YICK…MKVH). Positions 403 to 466 (RKHMKVHESQ…LPPNFNEWYV (64 aa)) are disordered. Residues 411 to 427 (SQGSDSSPAASSGYESS) show a composition bias toward low complexity. Positions 434-454 (SANSKDTTKTPSAVQTSTSHN) are enriched in polar residues.

Belongs to the GLI C2H2-type zinc-finger protein family. In terms of assembly, interacts with KPNA1 and KPNA6. Interacts (via C2H2-type domains 3, 4 and 5) with GLI3; the interaction enhances its transcriptional activity. Interacts (via the C2H2-type domains 3, 4 and 5) with MDFIC (via the C2H2-type domains 3, 4 and 5); the interaction reduces its transcriptional activity. In terms of tissue distribution, CNS. A high level expression is seen in the cerebellum.

It is found in the nucleus. The protein resides in the cytoplasm. Its function is as follows. Acts as a transcriptional activator. Required in the earliest stages in both axial midline development and left-right (LR) asymmetry specification. Binds to the minimal GLI-consensus sequence 5'-GGGTGGTC-3'. In Mus musculus (Mouse), this protein is Zinc finger protein ZIC 3 (Zic3).